The primary structure comprises 1173 residues: Clustered mitochondria protein homolog (1173 aa).

The span at M1–T21 shows a compositional bias: low complexity. The disordered stretch occupies residues M1 to H25. Residues V316 to L565 form the Clu domain. Residues K888–R910 are disordered. The span at T890–L901 shows a compositional bias: basic residues. The TPR repeat unit spans residues A984–F1017.

The protein belongs to the CLU family. May associate with the eukaryotic translation initiation factor 3 (eIF-3) complex.

It is found in the cytoplasm. Its function is as follows. mRNA-binding protein involved in proper cytoplasmic distribution of mitochondria. The chain is Clustered mitochondria protein homolog from Schizosaccharomyces pombe (strain 972 / ATCC 24843) (Fission yeast).